Consider the following 138-residue polypeptide: Ribulose bisphosphate carboxylase small subunit (138 aa).

Belongs to the RuBisCO small chain family. In terms of assembly, heterohexadecamer of 8 large and 8 small subunits.

The protein localises to the plastid. It localises to the chloroplast. Its function is as follows. RuBisCO catalyzes two reactions: the carboxylation of D-ribulose 1,5-bisphosphate, the primary event in carbon dioxide fixation, as well as the oxidative fragmentation of the pentose substrate in the photorespiration process. Both reactions occur simultaneously and in competition at the same active site. Although the small subunit is not catalytic it is essential for maximal activity. This is Ribulose bisphosphate carboxylase small subunit from Antithamnion sp. (Red alga).